The sequence spans 65 residues: Conotoxin Lt5.1 (65 aa).

The first 19 residues, 1-19 (MRCLPVFIILLLLIPSAPS), serve as a signal peptide directing secretion. A propeptide spanning residues 20–48 (VDAQRKTKDDVPLASFHDNAKRTLKRLWN) is cleaved from the precursor.

It belongs to the conotoxin T superfamily. Post-translationally, contains 2 disulfide bonds that can be either 'C1-C3, C2-C4' or 'C1-C4, C2-C3', since these disulfide connectivities have been observed for conotoxins with cysteine framework V (for examples, see AC P0DQQ7 and AC P81755). Expressed by the venom duct.

It localises to the secreted. This chain is Conotoxin Lt5.1, found in Conus litteratus (Lettered cone).